The following is a 131-amino-acid chain: Anaerobic and virulence modulator AnvM (131 aa).

Its function is as follows. Plays an essential role by modulating the expression of hundreds of genes including quorum sensing system genes and oxidative stress resistance genes under both aerobic and anaerobic conditions. The sequence is that of Anaerobic and virulence modulator AnvM from Pseudomonas aeruginosa (strain ATCC 15692 / DSM 22644 / CIP 104116 / JCM 14847 / LMG 12228 / 1C / PRS 101 / PAO1).